The sequence spans 331 residues: Tetraacyldisaccharide 4'-kinase (331 aa).

60 to 67 is a binding site for ATP; that stretch reads TVGGTGKT.

The protein belongs to the LpxK family.

The catalysed reaction is a lipid A disaccharide + ATP = a lipid IVA + ADP + H(+). It functions in the pathway glycolipid biosynthesis; lipid IV(A) biosynthesis; lipid IV(A) from (3R)-3-hydroxytetradecanoyl-[acyl-carrier-protein] and UDP-N-acetyl-alpha-D-glucosamine: step 6/6. Functionally, transfers the gamma-phosphate of ATP to the 4'-position of a tetraacyldisaccharide 1-phosphate intermediate (termed DS-1-P) to form tetraacyldisaccharide 1,4'-bis-phosphate (lipid IVA). This chain is Tetraacyldisaccharide 4'-kinase, found in Pseudomonas syringae pv. syringae (strain B728a).